A 132-amino-acid chain; its full sequence is Ribosome-binding factor A (132 aa).

Belongs to the RbfA family. As to quaternary structure, monomer. Binds 30S ribosomal subunits, but not 50S ribosomal subunits or 70S ribosomes.

Its subcellular location is the cytoplasm. Functionally, one of several proteins that assist in the late maturation steps of the functional core of the 30S ribosomal subunit. Associates with free 30S ribosomal subunits (but not with 30S subunits that are part of 70S ribosomes or polysomes). Required for efficient processing of 16S rRNA. May interact with the 5'-terminal helix region of 16S rRNA. The chain is Ribosome-binding factor A from Pseudomonas putida (strain ATCC 700007 / DSM 6899 / JCM 31910 / BCRC 17059 / LMG 24140 / F1).